We begin with the raw amino-acid sequence, 301 residues long: GTPase Era (301 aa).

Positions 6–173 constitute an Era-type G domain; sequence KSGFVAIVGR…LEQTNANLEI (168 aa). Residues 14–21 form a G1 region; that stretch reads GRPNVGKS. Residue 14–21 coordinates GTP; the sequence is GRPNVGKS. Residues 40–44 are G2; that stretch reads QTTRN. The G3 stretch occupies residues 61 to 64; that stretch reads DTPG. GTP contacts are provided by residues 61-65 and 123-126; these read DTPGI and NKID. The interval 123–126 is G4; sequence NKID. The interval 152–154 is G5; that stretch reads ISA. A KH type-2 domain is found at 204–282; sequence TREEVPHSVA…FLEIWVKVQK (79 aa).

This sequence belongs to the TRAFAC class TrmE-Era-EngA-EngB-Septin-like GTPase superfamily. Era GTPase family. As to quaternary structure, monomer.

It localises to the cytoplasm. The protein localises to the cell membrane. In terms of biological role, an essential GTPase that binds both GDP and GTP, with rapid nucleotide exchange. Plays a role in 16S rRNA processing and 30S ribosomal subunit biogenesis and possibly also in cell cycle regulation and energy metabolism. The chain is GTPase Era from Listeria monocytogenes serotype 4b (strain F2365).